The primary structure comprises 352 residues: Biotin synthase (352 aa).

The 219-residue stretch at asparagine 44–lysine 262 folds into the Radical SAM core domain. [4Fe-4S] cluster is bound by residues cysteine 59, cysteine 63, and cysteine 66. Cysteine 103, cysteine 134, cysteine 194, and arginine 266 together coordinate [2Fe-2S] cluster.

It belongs to the radical SAM superfamily. Biotin synthase family. As to quaternary structure, homodimer. Requires [4Fe-4S] cluster as cofactor. The cofactor is [2Fe-2S] cluster.

It catalyses the reaction (4R,5S)-dethiobiotin + (sulfur carrier)-SH + 2 reduced [2Fe-2S]-[ferredoxin] + 2 S-adenosyl-L-methionine = (sulfur carrier)-H + biotin + 2 5'-deoxyadenosine + 2 L-methionine + 2 oxidized [2Fe-2S]-[ferredoxin]. The protein operates within cofactor biosynthesis; biotin biosynthesis; biotin from 7,8-diaminononanoate: step 2/2. Catalyzes the conversion of dethiobiotin (DTB) to biotin by the insertion of a sulfur atom into dethiobiotin via a radical-based mechanism. This Pseudomonas putida (strain ATCC 47054 / DSM 6125 / CFBP 8728 / NCIMB 11950 / KT2440) protein is Biotin synthase.